We begin with the raw amino-acid sequence, 66 residues long: Large ribosomal subunit protein bL35 (66 aa).

This sequence belongs to the bacterial ribosomal protein bL35 family.

The protein is Large ribosomal subunit protein bL35 of Borreliella burgdorferi (strain ATCC 35210 / DSM 4680 / CIP 102532 / B31) (Borrelia burgdorferi).